The primary structure comprises 942 residues: Lambda-carrageenase (942 aa).

A signal peptide spans 1–25; sequence MKIKILSAMIASSLLIGCVIPTVKA.

In terms of assembly, monomer.

It localises to the secreted. The enzyme catalyses Endohydrolysis of (1-&gt;4)-beta-linkages in the backbone of lambda-carrageenan, resulting in the tetrasaccharide alpha-D-Galp2,6S2-(1-&gt;3)-beta-D-Galp2S-(1-&gt;4)-alpha-D-Galp2,6S2-(1-&gt;3)-D-Galp2S.. Its function is as follows. Hydrolyzes lambda-carrageenan with inversion of anomeric configuration. Does not hydrolyze iota- and kappa-carrageenans, agarose or porphyran. The sequence is that of Lambda-carrageenase from Pseudoalteromonas sp.